Here is a 132-residue protein sequence, read N- to C-terminus: Replication enhancer protein (132 aa).

This sequence belongs to the geminiviridae replication enhancer protein family. Homooligomer. Interacts with the replication-associated protein (REP). Interacts with host proliferating cell nuclear antigen (PCNA). Interacts with host retinoblastoma-related protein 1 (RBR1), and may thereby deregulate the host cell cycle. Oligomerization and interaction with PCNA are necessary for optimal replication enhancement.

Functionally, increases viral DNA accumulation. Enhances infectivity and symptom expression. The polypeptide is Replication enhancer protein (Potato yellow mosaic virus (isolate Venezuela) (PYMV)).